Consider the following 185-residue polypeptide: MARPDKAAAVAELTDQFRSSNAAVLTEYRGLTVAQLKELRRSLGENAQYAVVKNTLTKIAANEAGIDTLDDLFSGPTAVAFVTGDPVESAKGLRDFAKDNPNLIIKGGVLDGKALSADEIKKLADLESREVLLSKLAGAFKGKQTQAAQVFQALPSKFVRTAEALRAKKEEQGGAGTPAPAEAAE.

The segment at 165–185 (LRAKKEEQGGAGTPAPAEAAE) is disordered.

This sequence belongs to the universal ribosomal protein uL10 family. As to quaternary structure, part of the ribosomal stalk of the 50S ribosomal subunit. The N-terminus interacts with L11 and the large rRNA to form the base of the stalk. The C-terminus forms an elongated spine to which L12 dimers bind in a sequential fashion forming a multimeric L10(L12)X complex.

Its function is as follows. Forms part of the ribosomal stalk, playing a central role in the interaction of the ribosome with GTP-bound translation factors. This is Large ribosomal subunit protein uL10 from Streptomyces griseus subsp. griseus (strain JCM 4626 / CBS 651.72 / NBRC 13350 / KCC S-0626 / ISP 5235).